We begin with the raw amino-acid sequence, 229 residues long: Cytochrome c oxidase subunit 2 (229 aa).

At 1–14 the chain is on the mitochondrial intermembrane side; the sequence is MANPTHLGFQDAMS. A helical transmembrane segment spans residues 15–45; the sequence is PLMEELLYFHDHTLMILFLISSLVFYMIFAL. Topologically, residues 46–59 are mitochondrial matrix; the sequence is LFPKLYYPNTSDVQ. A helical membrane pass occupies residues 60 to 87; the sequence is EVEVIWTVLPAIVLISIALPSLRTLYLM. The Mitochondrial intermembrane segment spans residues 88–229; that stretch reads DETNNPCLTI…QLWLEDSILS (142 aa). Cu cation-binding residues include His-161, Cys-196, Glu-198, Cys-200, His-204, and Met-207. Glu-198 is a binding site for Mg(2+).

This sequence belongs to the cytochrome c oxidase subunit 2 family. In terms of assembly, component of the cytochrome c oxidase (complex IV, CIV), a multisubunit enzyme composed of 14 subunits. The complex is composed of a catalytic core of 3 subunits MT-CO1, MT-CO2 and MT-CO3, encoded in the mitochondrial DNA, and 11 supernumerary subunits COX4I, COX5A, COX5B, COX6A, COX6B, COX6C, COX7A, COX7B, COX7C, COX8 and NDUFA4, which are encoded in the nuclear genome. The complex exists as a monomer or a dimer and forms supercomplexes (SCs) in the inner mitochondrial membrane with NADH-ubiquinone oxidoreductase (complex I, CI) and ubiquinol-cytochrome c oxidoreductase (cytochrome b-c1 complex, complex III, CIII), resulting in different assemblies (supercomplex SCI(1)III(2)IV(1) and megacomplex MCI(2)III(2)IV(2)). Found in a complex with TMEM177, COA6, COX18, COX20, SCO1 and SCO2. Interacts with TMEM177 in a COX20-dependent manner. Interacts with COX20. Interacts with COX16. It depends on Cu cation as a cofactor.

The protein resides in the mitochondrion inner membrane. It catalyses the reaction 4 Fe(II)-[cytochrome c] + O2 + 8 H(+)(in) = 4 Fe(III)-[cytochrome c] + 2 H2O + 4 H(+)(out). Component of the cytochrome c oxidase, the last enzyme in the mitochondrial electron transport chain which drives oxidative phosphorylation. The respiratory chain contains 3 multisubunit complexes succinate dehydrogenase (complex II, CII), ubiquinol-cytochrome c oxidoreductase (cytochrome b-c1 complex, complex III, CIII) and cytochrome c oxidase (complex IV, CIV), that cooperate to transfer electrons derived from NADH and succinate to molecular oxygen, creating an electrochemical gradient over the inner membrane that drives transmembrane transport and the ATP synthase. Cytochrome c oxidase is the component of the respiratory chain that catalyzes the reduction of oxygen to water. Electrons originating from reduced cytochrome c in the intermembrane space (IMS) are transferred via the dinuclear copper A center (CU(A)) of subunit 2 and heme A of subunit 1 to the active site in subunit 1, a binuclear center (BNC) formed by heme A3 and copper B (CU(B)). The BNC reduces molecular oxygen to 2 water molecules using 4 electrons from cytochrome c in the IMS and 4 protons from the mitochondrial matrix. This chain is Cytochrome c oxidase subunit 2 (MT-CO2), found in Alligator mississippiensis (American alligator).